The sequence spans 382 residues: Chaperone protein DnaJ (382 aa).

Residues 5–70 (DFYEILGVPK…QKRAAYDQYG (66 aa)) form the J domain. The CR-type zinc-finger motif lies at 137 to 215 (GVTKEIRIPT…CHGHGRVEKT (79 aa)). Residues C150, C153, C167, C170, C189, C192, C203, and C206 each coordinate Zn(2+). CXXCXGXG motif repeat units follow at residues 150 to 157 (CDICHGSG), 167 to 174 (CPTCHGSG), 189 to 196 (CPHCHGRG), and 203 to 210 (CNKCHGHG).

This sequence belongs to the DnaJ family. Homodimer. Requires Zn(2+) as cofactor.

The protein localises to the cytoplasm. In terms of biological role, participates actively in the response to hyperosmotic and heat shock by preventing the aggregation of stress-denatured proteins and by disaggregating proteins, also in an autonomous, DnaK-independent fashion. Unfolded proteins bind initially to DnaJ; upon interaction with the DnaJ-bound protein, DnaK hydrolyzes its bound ATP, resulting in the formation of a stable complex. GrpE releases ADP from DnaK; ATP binding to DnaK triggers the release of the substrate protein, thus completing the reaction cycle. Several rounds of ATP-dependent interactions between DnaJ, DnaK and GrpE are required for fully efficient folding. Also involved, together with DnaK and GrpE, in the DNA replication of plasmids through activation of initiation proteins. This is Chaperone protein DnaJ from Enterobacter sp. (strain 638).